Here is a 170-residue protein sequence, read N- to C-terminus: NADH-quinone oxidoreductase subunit B (170 aa).

The [4Fe-4S] cluster site is built by Cys42, Cys43, Cys107, and Cys136.

Belongs to the complex I 20 kDa subunit family. In terms of assembly, NDH-1 is composed of 14 different subunits. Subunits NuoB, C, D, E, F, and G constitute the peripheral sector of the complex. Requires [4Fe-4S] cluster as cofactor.

The protein resides in the cell inner membrane. It catalyses the reaction a quinone + NADH + 5 H(+)(in) = a quinol + NAD(+) + 4 H(+)(out). In terms of biological role, NDH-1 shuttles electrons from NADH, via FMN and iron-sulfur (Fe-S) centers, to quinones in the respiratory chain. The immediate electron acceptor for the enzyme in this species is believed to be ubiquinone. Couples the redox reaction to proton translocation (for every two electrons transferred, four hydrogen ions are translocated across the cytoplasmic membrane), and thus conserves the redox energy in a proton gradient. The protein is NADH-quinone oxidoreductase subunit B of Campylobacter curvus (strain 525.92).